A 379-amino-acid chain; its full sequence is Epoxyqueuosine reductase (379 aa).

D140 acts as the Proton donor in catalysis. The region spanning 184-214 is the 4Fe-4S ferredoxin-type domain; it reads FEPDTPASDLCGSCNQCVKACPTGSLLGEGK. Residues C194, C197, C200, C204, C220, C246, C249, and C253 each contribute to the [4Fe-4S] cluster site. Residues 307–332 form an HEAT-like PBS-type repeat; that stretch reads QRNAIIILARYKDKTAVPDLIDCLQN.

This sequence belongs to the QueG family. In terms of assembly, monomer. Cob(II)alamin is required as a cofactor. Requires [4Fe-4S] cluster as cofactor.

The protein resides in the cytoplasm. The enzyme catalyses epoxyqueuosine(34) in tRNA + AH2 = queuosine(34) in tRNA + A + H2O. Its pathway is tRNA modification; tRNA-queuosine biosynthesis. Catalyzes the conversion of epoxyqueuosine (oQ) to queuosine (Q), which is a hypermodified base found in the wobble positions of tRNA(Asp), tRNA(Asn), tRNA(His) and tRNA(Tyr). This is Epoxyqueuosine reductase from Listeria monocytogenes serovar 1/2a (strain ATCC BAA-679 / EGD-e).